The sequence spans 155 residues: Mediator of RNA polymerase II transcription subunit 10 (155 aa).

A disordered region spans residues 54–80; that stretch reads SSHTQSHAPDADTAQANPSDPPISTIE.

It belongs to the Mediator complex subunit 10 family. Component of the Mediator complex.

It is found in the nucleus. Functionally, component of the Mediator complex, a coactivator involved in the regulated transcription of nearly all RNA polymerase II-dependent genes. Mediator functions as a bridge to convey information from gene-specific regulatory proteins to the basal RNA polymerase II transcription machinery. Mediator is recruited to promoters by direct interactions with regulatory proteins and serves as a scaffold for the assembly of a functional preinitiation complex with RNA polymerase II and the general transcription factors. The protein is Mediator of RNA polymerase II transcription subunit 10 (nut2) of Aspergillus terreus (strain NIH 2624 / FGSC A1156).